The chain runs to 149 residues: Transcription factor Atoh7 (149 aa).

Residues 41–93 (RRRLAANARERRRMQGLNTAFDRLRRVVPQWGQDKKLSKYETLQMALSYIIAL) enclose the bHLH domain.

As to quaternary structure, forms a heterodimer with TCF3 isoform E47; interaction may be required for DNA-binding in certain situations. In terms of tissue distribution, expressed in retinal ganglion cells. Expressed in the cerebellum, trapezoid body, ventral nucleus of the lateral lamniscus and in areas of the auditory hindbrain such as the cochlear nucleus, lateral superior olive and medial nucleus of the trapezoid body. Expressed in the modiolar nerve root and in the cochlear in a small group of bushy neurons within the acoustic nerve. Expressed weakly in the sensory epithelia of the saccule and utricle.

It is found in the nucleus. The protein resides in the perikaryon. The protein localises to the cell projection. It localises to the axon. Its function is as follows. Transcription factor that binds to DNA at the consensus sequence 5'-CAG[GC]TG-3'. Dimerization with TCF3 isoform E47 may be required in certain situations. Binds to gene promoters and enhancer elements, and thereby regulates a transcriptional program of retinal ganglion cell (RGC) determinant genes. Although the exact mechanism is not certain, retinal transcription regulation by ATOH7 has a role in RGC determination and survival, photoreceptor population development, targeting of RGC axons to the optic nerve and development of the retino-hypothalamic tract. Binds to its own promoter and enhancer sequences, suggesting autoregulation of ATOH7 transcription. Required for retinal circadian rhythm photoentrainment. Plays a role in brainstem auditory signaling and binaural processing. In Mus musculus (Mouse), this protein is Transcription factor Atoh7.